Consider the following 369-residue polypeptide: Tyrosyl-DNA phosphodiesterase 2 (369 aa).

A compositionally biased stretch (basic and acidic residues) spans 1 to 17 (MELEARAEPRSPRAGRG). Disordered regions lie at residues 1-26 (MELEARAEPRSPRAGRGEEEEDEDEE) and 80-117 (AAAAGGGSAGPGSCIDLTADDTASNTSSSGADSKQQDD). The segment covering 99–112 (DDTASNTSSSGADS) has biased composition (low complexity). The segment at 127–131 (NIDGL) is interaction with 5' end of substrate DNA. Mg(2+) contacts are provided by aspartate 129 and glutamate 159. The segment at 233-238 (HLESTR) is interaction with 5' end of substrate DNA. The active-site Proton donor/acceptor is the aspartate 269. Residues 271–273 (NLR) form an interaction with 5' end of substrate DNA region.

It belongs to the CCR4/nocturin family. TTRAP/TDP2 subfamily. Mg(2+) is required as a cofactor. Requires Mn(2+) as cofactor.

It is found in the nucleus. The protein resides in the PML body. Its function is as follows. DNA repair enzyme that can remove a variety of covalent adducts from DNA through hydrolysis of a 5'-phosphodiester bond, giving rise to DNA with a free 5' phosphate. Catalyzes the hydrolysis of dead-end complexes between DNA and the topoisomerase 2 (TOP2) active site tyrosine residue. Hydrolyzes 5'-phosphoglycolates on protruding 5' ends on DNA double-strand breaks (DSBs) due to DNA damage by radiation and free radicals. The 5'-tyrosyl DNA phosphodiesterase activity can enable the repair of TOP2-induced DSBs without the need for nuclease activity, creating a 'clean' DSB with 5'-phosphate termini that are ready for ligation. Also has 3'-tyrosyl DNA phosphodiesterase activity, but less efficiently and much slower than TDP1. The sequence is that of Tyrosyl-DNA phosphodiesterase 2 (TDP2) from Gallus gallus (Chicken).